We begin with the raw amino-acid sequence, 94 residues long: Small ribosomal subunit protein uS19 (94 aa).

It belongs to the universal ribosomal protein uS19 family.

Functionally, protein S19 forms a complex with S13 that binds strongly to the 16S ribosomal RNA. The protein is Small ribosomal subunit protein uS19 of Wolbachia pipientis wMel.